The sequence spans 257 residues: Diphthine synthase (257 aa).

S-adenosyl-L-methionine is bound by residues Ile-11, Asp-89, Ile-92, 117-118, Leu-169, Leu-210, and His-235; that span reads SV.

Belongs to the diphthine synthase family. As to quaternary structure, homodimer.

The catalysed reaction is 2-[(3S)-amino-3-carboxypropyl]-L-histidyl-[translation elongation factor 2] + 3 S-adenosyl-L-methionine = diphthine-[translation elongation factor 2] + 3 S-adenosyl-L-homocysteine + 3 H(+). It participates in protein modification; peptidyl-diphthamide biosynthesis. Functionally, S-adenosyl-L-methionine-dependent methyltransferase that catalyzes the trimethylation of the amino group of the modified target histidine residue in translation elongation factor 2 (EF-2), to form an intermediate called diphthine. The three successive methylation reactions represent the second step of diphthamide biosynthesis. The protein is Diphthine synthase of Saccharolobus islandicus (strain L.S.2.15 / Lassen #1) (Sulfolobus islandicus).